The following is a 381-amino-acid chain: Adaptive-response sensory kinase SasA (381 aa).

Residues 154 to 367 form the Histidine kinase domain; sequence MVAHELRTPL…CFYFTVPVWD (214 aa). His-157 carries the post-translational modification Phosphohistidine; by autocatalysis.

In terms of assembly, homooligomerizes. Interacts with KaiC. Participates in the KaiBC complex, whose core is composed of a KaiC homohexamer and 6 KaiB.

It catalyses the reaction ATP + protein L-histidine = ADP + protein N-phospho-L-histidine.. Functionally, member of the two-component regulatory system SasA/RpaA involved in genome-wide circadian gene expression. One of several clock output pathways. Participates in the Kai clock protein complex, the main circadian regulator in cyanobacteria, via its interaction with KaiC. KaiC enhances the autophosphorylation activity of SasA, which then transfers its phosphate group to RpaA to activate it. In addition to its output function, recruits fold-shifted KaiB (KaiB(fs)) to KaiC to cooperatively form the KaiB(6):KaiC(6) complex (independent of SasA kinase activity). Required for robustness of the circadian rhythm of gene expression and is involved in clock output, also required for adaptation to light/dark cycles. This Prochlorococcus marinus (strain SARG / CCMP1375 / SS120) protein is Adaptive-response sensory kinase SasA.